Reading from the N-terminus, the 782-residue chain is Cysteine-rich protein 2-binding protein (782 aa).

Serine 4 is subject to Phosphoserine. The tract at residues 13-33 is disordered; the sequence is RHDDEATRTSTSEGLEEGEVE. N6-acetyllysine is present on lysine 231. The tract at residues 251–282 is disordered; it reads PVESAMELKEKRSRTQEAKDIRRAQKEAAGFL. The segment covering 256-276 has biased composition (basic and acidic residues); that stretch reads MELKEKRSRTQEAKDIRRAQK. Serine 285 is subject to Phosphoserine. Lysine 292 is subject to N6-acetyllysine. Over residues 315 to 335 the composition is skewed to low complexity; that stretch reads LSSSDRTPLTSPSPSPSLDFS. Disordered regions lie at residues 315-346 and 400-460; these read LSSS…HSAT and VRKK…EPRY. 2 stretches are compositionally biased toward basic and acidic residues: residues 405–426 and 446–459; these read RGPE…RMDI and KPQL…KEPR. The residue at position 416 (serine 416) is a Phosphoserine. The N-acetyltransferase domain maps to 638 to 782; it reads LDYCYVRPNH…KHAFFLRLRR (145 aa).

Interacts with the LIM 1 domain of CSRP2. Component of the ADA2A-containing complex (ATAC), composed of CSRP2BP, KAT2A, TADA2L, TADA3L, ZZ3, MBIP, WDR5, YEATS2, CCDC101 and DR1. In the complex, it probably interacts directly with KAT2A, MBIP and WDR5. In terms of tissue distribution, expressed in skeletal muscle, heart, lung, placenta, brain, liver, pancreas and kidney. High expression in skeletal muscle and heart. Lower expression in lung.

The protein resides in the nucleus. Its subcellular location is the cytoplasm. Functionally, component of the ATAC complex, a complex with histone acetyltransferase activity on histones H3 and H4. May function as a scaffold for the ATAC complex to promote ATAC complex stability. Has also weak histone acetyltransferase activity toward histone H4. Required for the normal progression through G1 and G2/M phases of the cell cycle. This is Cysteine-rich protein 2-binding protein from Homo sapiens (Human).